Here is a 441-residue protein sequence, read N- to C-terminus: MSNVTHQPKIGFVSLGCPKNLVDSERILTELRTEGYDVVPTYDNADMVIVNTCGFIDSAVQESLEAIGEALKENGKVIVTGCLGAKEDQIREVHPKVLEITGPHSYEQVLEHVHHYTPKPKHNPFLSLVPEQGVKLTPRHYAYLKISEGCNHRCTFCIIPSMRGDLVSRPIGEVLAEAKRLADAGVKELLVISQDTSAYGVDVKHRTGFHNGMPVKTSMVSLCEELAKLGIWVRLHYVYPYPHVDDVIPLMAEGKILPYLDIPLQHASPRILKLMKRPGSADRQLARIKQWREICPDLTLRSTFIVGFPGETEEDFQMLLDFLKEARLDRVGCFKYSPVEGATANELADQVPEEVKEERWNRFMQLQQQISAERLQEKVGREILVLVDEVDEEGAIGRSMADAPEIDGAVYLNGETRVKPGDVVRVKVEHADEYDLWGTRV.

One can recognise an MTTase N-terminal domain in the interval proline 8–proline 118. 6 residues coordinate [4Fe-4S] cluster: cysteine 17, cysteine 53, cysteine 82, cysteine 150, cysteine 154, and cysteine 157. A Radical SAM core domain is found at leucine 136–glutamate 373. In terms of domain architecture, TRAM spans glutamine 376–valine 441.

It belongs to the methylthiotransferase family. RimO subfamily. It depends on [4Fe-4S] cluster as a cofactor.

The protein resides in the cytoplasm. It carries out the reaction L-aspartate(89)-[ribosomal protein uS12]-hydrogen + (sulfur carrier)-SH + AH2 + 2 S-adenosyl-L-methionine = 3-methylsulfanyl-L-aspartate(89)-[ribosomal protein uS12]-hydrogen + (sulfur carrier)-H + 5'-deoxyadenosine + L-methionine + A + S-adenosyl-L-homocysteine + 2 H(+). Catalyzes the methylthiolation of an aspartic acid residue of ribosomal protein uS12. The protein is Ribosomal protein uS12 methylthiotransferase RimO of Klebsiella pneumoniae subsp. pneumoniae (strain ATCC 700721 / MGH 78578).